The primary structure comprises 334 residues: Glutaredoxin-3 (334 aa).

A2 is modified (N-acetylalanine). Residues 2 to 116 (AGGAAEAAAA…LTKKVQRHAS (115 aa)) form the Thioredoxin domain. Residues 110–131 (KVQRHASSGSFSPSGSEHPKED) form a disordered region. A phosphoserine mark is found at S116 and S119. Positions 116 to 125 (SSGSFSPSGS) are enriched in low complexity. 2 consecutive Glutaredoxin domains span residues 145-235 (CMLF…PKLE) and 236-334 (ERLK…KGEN). Positions 158 and 260 each coordinate [2Fe-2S] cluster.

In terms of assembly, homodimer; the homodimer is independent of 2Fe-2S clusters. Heterotrimer; forms a heterotrimeric complex composed by two BOLA2 molecules and one GLRX3 molecule; linked by [2Fe-2S] clusters. Interacts (via N-terminus) with PRKCQ/PKC-theta. Interacts (via C-terminus) with CSRP3. Interacts with CSRP2.

It is found in the cytoplasm. Its subcellular location is the cytosol. It localises to the cell cortex. The protein resides in the myofibril. The protein localises to the sarcomere. It is found in the z line. Together with BOLA2, acts as a cytosolic iron-sulfur (Fe-S) cluster assembly factor that facilitates [2Fe-2S] cluster insertion into a subset of cytosolic proteins. Acts as a critical negative regulator of cardiac hypertrophy and a positive inotropic regulator. Required for hemoglobin maturation. Does not possess any thyoredoxin activity since it lacks the conserved motif that is essential for catalytic activity. In Bos taurus (Bovine), this protein is Glutaredoxin-3 (GLRX3).